The following is a 177-amino-acid chain: Dual-action ribosomal maturation protein DarP (177 aa).

This sequence belongs to the DarP family.

It localises to the cytoplasm. In terms of biological role, member of a network of 50S ribosomal subunit biogenesis factors which assembles along the 30S-50S interface, preventing incorrect 23S rRNA structures from forming. Promotes peptidyl transferase center (PTC) maturation. This chain is Dual-action ribosomal maturation protein DarP, found in Histophilus somni (strain 129Pt) (Haemophilus somnus).